Reading from the N-terminus, the 647-residue chain is Chaperone protein DnaK (647 aa).

At Thr-198 the chain carries Phosphothreonine; by autocatalysis. Residues 603–647 (EQAQGAGGAQGFDPNAFQGGDAGQQQKADDGVVDAEFTEVKDDKK) form a disordered region. Over residues 618–628 (AFQGGDAGQQQ) the composition is skewed to low complexity.

It belongs to the heat shock protein 70 family.

Acts as a chaperone. The chain is Chaperone protein DnaK from Acinetobacter baylyi (strain ATCC 33305 / BD413 / ADP1).